A 185-amino-acid polypeptide reads, in one-letter code: Ribosome-recycling factor (185 aa).

Belongs to the RRF family.

It is found in the cytoplasm. Responsible for the release of ribosomes from messenger RNA at the termination of protein biosynthesis. May increase the efficiency of translation by recycling ribosomes from one round of translation to another. In Coxiella burnetii (strain CbuK_Q154) (Coxiella burnetii (strain Q154)), this protein is Ribosome-recycling factor.